The primary structure comprises 381 residues: UDP-4-amino-4-deoxy-L-arabinose--oxoglutarate aminotransferase (381 aa).

Lys182 carries the N6-(pyridoxal phosphate)lysine modification.

The protein belongs to the DegT/DnrJ/EryC1 family. ArnB subfamily. In terms of assembly, homodimer. Pyridoxal 5'-phosphate serves as cofactor.

It catalyses the reaction UDP-4-amino-4-deoxy-beta-L-arabinose + 2-oxoglutarate = UDP-beta-L-threo-pentopyranos-4-ulose + L-glutamate. It functions in the pathway nucleotide-sugar biosynthesis; UDP-4-deoxy-4-formamido-beta-L-arabinose biosynthesis; UDP-4-deoxy-4-formamido-beta-L-arabinose from UDP-alpha-D-glucuronate: step 2/3. The protein operates within bacterial outer membrane biogenesis; lipopolysaccharide biosynthesis. Catalyzes the conversion of UDP-4-keto-arabinose (UDP-Ara4O) to UDP-4-amino-4-deoxy-L-arabinose (UDP-L-Ara4N). The modified arabinose is attached to lipid A and is required for resistance to polymyxin and cationic antimicrobial peptides. In Photorhabdus laumondii subsp. laumondii (strain DSM 15139 / CIP 105565 / TT01) (Photorhabdus luminescens subsp. laumondii), this protein is UDP-4-amino-4-deoxy-L-arabinose--oxoglutarate aminotransferase.